The following is a 66-amino-acid chain: Large ribosomal subunit protein bL35 (66 aa).

Residues 25-45 form a disordered region; sequence QAAGKRHGMSKRPQKMKRNAR. Basic residues predominate over residues 28–44; the sequence is GKRHGMSKRPQKMKRNA.

It belongs to the bacterial ribosomal protein bL35 family.

In Rhodospirillum centenum (strain ATCC 51521 / SW), this protein is Large ribosomal subunit protein bL35.